The chain runs to 881 residues: Armadillo repeat-containing protein 3 (881 aa).

ARM repeat units lie at residues 15–54 (DVFD…KFAL), 57–96 (EENK…ILAS), 98–138 (SDVK…NMSV), 140–179 (YTGK…NLVQ), 181–220 (FQCR…VITC), 222–262 (KEAR…NCLE), 264–304 (MDTM…KAAY), 306–345 (PENR…ALCE), 346–385 (NLSC…NLTT), 388–427 (PANA…NMAT), 429–468 (EPLR…ATAC), and 470–509 (VEAR…VCAG). S-palmitoyl cysteine attachment occurs at residues Cys-507 and Cys-518. Positions 605 to 659 (NNKSDTSPPPSMEDKSSDVGYGRSISSSSSLRRGSKEKANAIFGSPTEEKSEPAS) are disordered. Low complexity predominate over residues 622–636 (DVGYGRSISSSSSLR).

As to quaternary structure, homodimer. Interacts with PIK3C3, PIK3R4 and BECN1. Interacts (via ARM domains) with ATG14. Post-translationally, palmitoylation is important for its function in autophagy. In terms of tissue distribution, testis-specific.

Essential for male fertility and sperm motility. During spermatogenesis, promotes the autophagic degradation of excessive ribosomes, providing energy resources for mitochondria and thus ensuring sperm flagellar motility. This is Armadillo repeat-containing protein 3 (Armc3) from Mus musculus (Mouse).